Consider the following 361-residue polypeptide: Arginine N(omega)-methyltransferase (361 aa).

Residues 1–17 show a composition bias toward basic and acidic residues; it reads MRHVQEARAVPAEHEAR. Residues 1-24 are disordered; the sequence is MRHVQEARAVPAEHEARPAPVTMP. The 297-residue stretch at 65–361 folds into the SAM-dependent MTase PRMT-type domain; the sequence is DADAFAQIAR…WSDFTLRVSI (297 aa).

This sequence belongs to the class I-like SAM-binding methyltransferase superfamily. Protein arginine N-methyltransferase family.

The catalysed reaction is L-arginine + S-adenosyl-L-methionine = N(omega)-methyl-L-arginine + S-adenosyl-L-homocysteine + H(+). It participates in antibiotic biosynthesis. Functionally, involved in the biosynthesis of the glucosamine-nitrosourea antibiotic streptozotocin (SZN). Catalyzes the conversion of L-arginine to N(omega)-methyl-L-arginine (L-NMA), using S-adenosyl-L-methionine (SAM) as a methyl donor. The protein is Arginine N(omega)-methyltransferase of Streptomyces achromogenes subsp. streptozoticus.